A 477-amino-acid polypeptide reads, in one-letter code: Stromelysin-3 (477 aa).

Positions 1-17 (MHLLILLPALCVLGAHS) are cleaved as a signal peptide. The propeptide at 18 to 85 (APLSYTYLQH…SSSGRNRQKR (68 aa)) is activation peptide. A disordered region spans residues 64-83 (RCGVPDIPAPPDSSSGRNRQ). Residues Cys65, His152, and Asp154 each contribute to the Zn(2+) site. The Ca(2+) site is built by Asp159, Gly160, Gly162, and Ile164. Residues His167, His180, and His203 each contribute to the Zn(2+) site. Glu204 is an active-site residue. 2 residues coordinate Zn(2+): His207 and His213. Cys279 and Cys466 are oxidised to a cystine. Hemopexin repeat units follow at residues 280–324 (KTNF…WRGI), 325–369 (PDTV…GISV), 370–418 (TQIQ…WRGV), and 419–466 (PKGI…FFNC).

The protein belongs to the peptidase M10A family. It depends on Ca(2+) as a cofactor. Requires Zn(2+) as cofactor. As to expression, expressed in fibroblast cells that are activated by thyroid hormone. High levels in resorbing tail.

The protein resides in the secreted. Its subcellular location is the extracellular space. It is found in the extracellular matrix. In terms of biological role, may be involved in the modification of the extracellular matrix during metamorphic apoptosis. This is Stromelysin-3 (mmp11) from Xenopus laevis (African clawed frog).